The following is a 549-amino-acid chain: Tegument protein (549 aa).

Disordered regions lie at residues 50 to 92, 353 to 391, and 523 to 542; these read KKKA…TASP, ETGD…CSSY, and TPIK…TRSP. Composition is skewed to polar residues over residues 75 to 84 and 356 to 369; these read PQALSVPSLS and DCSS…QTHR. The segment covering 523-534 has biased composition (low complexity); it reads TPIKTTSSSSPR.

In terms of biological role, this viral structural protein may have important functions, such as protein kinase activity, DNA binding, and possible transcriptional activation of immediate-early genes. The chain is Tegument protein from Homo sapiens (Human).